We begin with the raw amino-acid sequence, 398 residues long: Protochlorophyllide reductase, chloroplastic (398 aa).

Belongs to the short-chain dehydrogenases/reductases (SDR) family. POR subfamily.

It is found in the plastid. The protein localises to the chloroplast. It carries out the reaction chlorophyllide a + NADP(+) = protochlorophyllide a + NADPH + H(+). It participates in porphyrin-containing compound metabolism; chlorophyll biosynthesis. In terms of biological role, phototransformation of protochlorophyllide (Pchlide) to chlorophyllide (Chlide). This Daucus carota (Wild carrot) protein is Protochlorophyllide reductase, chloroplastic (POR1).